Reading from the N-terminus, the 382-residue chain is Transcription termination/antitermination protein NusA (382 aa).

One can recognise an S1 motif domain in the interval Glu-135 to Thr-199. In terms of domain architecture, KH spans Glu-301–Asp-367. Positions Leu-348–Glu-382 are disordered.

Belongs to the NusA family. In terms of assembly, monomer. Binds directly to the core enzyme of the DNA-dependent RNA polymerase and to nascent RNA.

The protein resides in the cytoplasm. In terms of biological role, participates in both transcription termination and antitermination. This chain is Transcription termination/antitermination protein NusA, found in Halalkalibacterium halodurans (strain ATCC BAA-125 / DSM 18197 / FERM 7344 / JCM 9153 / C-125) (Bacillus halodurans).